The following is a 515-amino-acid chain: ATP synthase subunit alpha (515 aa).

171–178 (GDRQTGKT) is a binding site for ATP.

It belongs to the ATPase alpha/beta chains family. In terms of assembly, F-type ATPases have 2 components, CF(1) - the catalytic core - and CF(0) - the membrane proton channel. CF(1) has five subunits: alpha(3), beta(3), gamma(1), delta(1), epsilon(1). CF(0) has three main subunits: a(1), b(2) and c(9-12). The alpha and beta chains form an alternating ring which encloses part of the gamma chain. CF(1) is attached to CF(0) by a central stalk formed by the gamma and epsilon chains, while a peripheral stalk is formed by the delta and b chains.

It localises to the cell inner membrane. It carries out the reaction ATP + H2O + 4 H(+)(in) = ADP + phosphate + 5 H(+)(out). Produces ATP from ADP in the presence of a proton gradient across the membrane. The alpha chain is a regulatory subunit. The protein is ATP synthase subunit alpha of Stenotrophomonas maltophilia (strain R551-3).